A 516-amino-acid chain; its full sequence is Apolipoprotein N-acyltransferase (516 aa).

A run of 6 helical transmembrane segments spans residues 24-44 (LAQA…LLYL), 58-78 (GWCY…ISIH), 90-110 (LLTL…AWLW), 125-145 (LAFA…LTGF), 163-183 (APLG…ALLV), and 192-212 (PPAL…GLAL). The CN hydrolase domain occupies 230-471 (VQGNVEQNLK…RAVLYGEVTP (242 aa)). E270 functions as the Proton acceptor in the catalytic mechanism. Residue K331 is part of the active site. Catalysis depends on C383, which acts as the Nucleophile. Residues 479 to 499 (LRWRAWPLAGLAVLLLGWALL) form a helical membrane-spanning segment.

The protein belongs to the CN hydrolase family. Apolipoprotein N-acyltransferase subfamily.

The protein localises to the cell inner membrane. It catalyses the reaction N-terminal S-1,2-diacyl-sn-glyceryl-L-cysteinyl-[lipoprotein] + a glycerophospholipid = N-acyl-S-1,2-diacyl-sn-glyceryl-L-cysteinyl-[lipoprotein] + a 2-acyl-sn-glycero-3-phospholipid + H(+). It participates in protein modification; lipoprotein biosynthesis (N-acyl transfer). In terms of biological role, catalyzes the phospholipid dependent N-acylation of the N-terminal cysteine of apolipoprotein, the last step in lipoprotein maturation. This Azotobacter vinelandii (strain DJ / ATCC BAA-1303) protein is Apolipoprotein N-acyltransferase.